The following is a 428-amino-acid chain: Mitochondrial distribution and morphology protein 12 (428 aa).

The SMP-LTD domain maps to 1 to 387; the sequence is MSFDINWNQL…WPSWICIDMN (387 aa). Disordered regions lie at residues 75-168 and 387-428; these read VMNE…APPL and NDDD…EAGE. Residues 81-96 are compositionally biased toward basic and acidic residues; it reads NDSKDEHLKNHGDGIN. Positions 106 to 133 are enriched in acidic residues; it reads LDDEDEDDEDDDEDDEDEEEEDEDDYDD. Residues 146–161 are compositionally biased toward polar residues; that stretch reads LNFNENSTTPSANSFA. The segment covering 387–403 has biased composition (acidic residues); that stretch reads NDDDDEEEEEEESEDND. A compositionally biased stretch (basic and acidic residues) spans 412–428; the sequence is NDGKHGDGRTDETEAGE.

The protein belongs to the MDM12 family. Component of the ER-mitochondria encounter structure (ERMES) or MDM complex, composed of MMM1, MDM10, MDM12 and MDM34. An MMM1 homodimer associates with one molecule of MDM12 on each side in a pairwise head-to-tail manner, and the SMP-LTD domains of MMM1 and MDM12 generate a continuous hydrophobic tunnel for phospholipid trafficking.

It is found in the mitochondrion outer membrane. The protein localises to the endoplasmic reticulum membrane. Functionally, component of the ERMES/MDM complex, which serves as a molecular tether to connect the endoplasmic reticulum (ER) and mitochondria. Components of this complex are involved in the control of mitochondrial shape and protein biogenesis, and function in nonvesicular lipid trafficking between the ER and mitochondria. MDM12 is required for the interaction of the ER-resident membrane protein MMM1 and the outer mitochondrial membrane-resident beta-barrel protein MDM10. The MDM12-MMM1 subcomplex functions in the major beta-barrel assembly pathway that is responsible for biogenesis of all mitochondrial outer membrane beta-barrel proteins, and acts in a late step after the SAM complex. The MDM10-MDM12-MMM1 subcomplex further acts in the TOM40-specific pathway after the action of the MDM12-MMM1 complex. Essential for establishing and maintaining the structure of mitochondria and maintenance of mtDNA nucleoids. This is Mitochondrial distribution and morphology protein 12 from Candida albicans (strain SC5314 / ATCC MYA-2876) (Yeast).